We begin with the raw amino-acid sequence, 476 residues long: Ribulose bisphosphate carboxylase large chain (476 aa).

The propeptide occupies 1 to 2 (MS). An N-acetylproline modification is found at Pro3. Lys14 bears the N6,N6,N6-trimethyllysine mark. Residues Asn123 and Thr173 each coordinate substrate. The active-site Proton acceptor is Lys175. Lys177 provides a ligand contact to substrate. Mg(2+)-binding residues include Lys201, Asp203, and Glu204. The residue at position 201 (Lys201) is an N6-carboxylysine. The Proton acceptor role is filled by His294. Substrate is bound by residues Arg295, His327, and Ser379.

The protein belongs to the RuBisCO large chain family. Type I subfamily. Heterohexadecamer of 8 large chains and 8 small chains; disulfide-linked. The disulfide link is formed within the large subunit homodimers. It depends on Mg(2+) as a cofactor. Post-translationally, the disulfide bond which can form in the large chain dimeric partners within the hexadecamer appears to be associated with oxidative stress and protein turnover.

The protein resides in the plastid. It localises to the chloroplast. The enzyme catalyses 2 (2R)-3-phosphoglycerate + 2 H(+) = D-ribulose 1,5-bisphosphate + CO2 + H2O. It catalyses the reaction D-ribulose 1,5-bisphosphate + O2 = 2-phosphoglycolate + (2R)-3-phosphoglycerate + 2 H(+). Functionally, ruBisCO catalyzes two reactions: the carboxylation of D-ribulose 1,5-bisphosphate, the primary event in carbon dioxide fixation, as well as the oxidative fragmentation of the pentose substrate in the photorespiration process. Both reactions occur simultaneously and in competition at the same active site. This chain is Ribulose bisphosphate carboxylase large chain, found in Arenaria drummondii (Drummond sandwort).